Here is an 80-residue protein sequence, read N- to C-terminus: RNA-binding protein Hfq (80 aa).

The 60-residue stretch at 10-69 (DPFLNALRKEHVPVSIYLVNGIKLQGNIESFDQYVVLLRNTVTQMVYKHAISTVVPARPV) folds into the Sm domain.

The protein belongs to the Hfq family. Homohexamer.

Functionally, RNA chaperone that binds small regulatory RNA (sRNAs) and mRNAs to facilitate mRNA translational regulation in response to envelope stress, environmental stress and changes in metabolite concentrations. Also binds with high specificity to tRNAs. The protein is RNA-binding protein Hfq of Burkholderia ambifaria (strain ATCC BAA-244 / DSM 16087 / CCUG 44356 / LMG 19182 / AMMD) (Burkholderia cepacia (strain AMMD)).